The chain runs to 1446 residues: Toll-like receptor 7 (1446 aa).

Positions 1-16 (MAAILLLLLGFSWSLA) are cleaved as a signal peptide. Residues 17–1049 (VESALAPKES…QHGIPESYIP (1033 aa)) are Extracellular-facing. LRR repeat units follow at residues 133–156 (LQTL…AFEG), 158–180 (ATLK…TLEL), 188–211 (LKQL…FLCP), 213–235 (GNLQ…GFAD), 246–270 (GSEL…GISR), 271–294 (LRRL…ALAG), 295–318 (LASL…LFAG), 320–342 (KELR…LFHR), 344–368 (EQLL…TFAG), 369–392 (LIRL…TFKE), 393–416 (LYFL…AFLP), 417–440 (LYNL…LFNG), 442–464 (YVLS…VFKN), 465–488 (CSDL…LQDL), 489–511 (AMLR…SFKN), 513–535 (HQLT…MFQD), 536–559 (LPRL…SFDK), 561–582 (FELE…VFAT), 584–605 (VSLL…AFIP), 606–629 (SNLK…KLQE), 631–652 (IRVK…MSIP), 653–675 (NTIE…AFVD), and 677–699 (ANLA…QLRV). An LRRCT domain is found at 716-773 (NPFECDCTMDWLQRINNLTTRQHPRVMDMANIECVMPHARGAAVRPLSGLRPQDFLCR). 3 disulfides stabilise this stretch: C722/C772, C796/C802, and C800/C815. LRR repeat units lie at residues 828-851 (PMDS…AFIG), 852-875 (RKNL…TFAS), 876-899 (LASL…EFEQ), 900-923 (LSAL…TLAP), 925-947 (AALE…QMHA), and 951-979 (GTRL…SYVA). Residues C966 and C993 are joined by a disulfide bond. Residues 1050–1070 (LLAAALALLFLLVVIAMVFAF) form a helical membrane-spanning segment. The Cytoplasmic segment spans residues 1071–1446 (RESLRIWLFA…QGPHVQAYLV (376 aa)). Positions 1096-1233 (KLYDAVLLHS…HFWEKLRYAL (138 aa)) constitute a TIR domain. Disordered regions lie at residues 1301-1332 (QNYS…NHHL) and 1388-1446 (RPKR…AYLV). The span at 1395–1413 (HLQQAQAGTLGSKASQAAH) shows a compositional bias: polar residues. Residues 1414–1426 (QQQQQQQQQQQQQ) show a composition bias toward low complexity. Over residues 1427–1439 (PNPTAVSGQQQGP) the composition is skewed to polar residues.

The protein belongs to the Toll-like receptor family. As to expression, expressed in the fan-shaped body and the ellipsoid body, which are components of the locomotion center in the CNS (at protein level).

It is found in the cell membrane. Functionally, toll-related receptor which binds to the neurotrophins NT1 and spz5. Essential for antiviral autophagy, it detects and binds to the vesicular stomatitis virus (vsv) following infection. This role is likely to be independent of the canonical Toll, immune deficiency, and JAK-STAT signaling pathways. Functions in olfactory circuit assembly by promoting synaptic partner matching between olfactory receptor neurons (ORN) axons and projection neurons (PN) dendrites partners in the antennal lobe. Function in the Va1d ORNs is necessary and sufficient for correct targeting to their partner PN dendrites. Also involved in the targeting of other classes of ORN axons. Functions with Toll-6 to regulate motor axon targeting and neuronal survival in the central nervous system (CNS). May be an upstream component of the NF-kappa-B (rel) regulatory cascade. This chain is Toll-like receptor 7, found in Drosophila melanogaster (Fruit fly).